A 448-amino-acid chain; its full sequence is Elongation factor 1-alpha (448 aa).

Residues 5 to 230 (KIHISIVVIG…DQINEPKRPS (226 aa)) enclose the tr-type G domain. A G1 region spans residues 14-21 (GHVDSGKS). Position 14-21 (14-21 (GHVDSGKS)) interacts with GTP. Residue K55 is modified to N6,N6-dimethyllysine. The G2 stretch occupies residues 70–74 (GITID). K79 bears the N6,N6,N6-trimethyllysine mark. Positions 91–94 (DAPG) are G3. GTP contacts are provided by residues 91-95 (DAPGH) and 153-156 (NKMD). The G4 stretch occupies residues 153–156 (NKMD). K187 is modified (N6,N6,N6-trimethyllysine). Residues 194–196 (SGF) form a G5 region. At K261 the chain carries N6-methyllysine. Residue E289 is modified to 5-glutamyl glycerylphosphorylethanolamine. K306 bears the N6,N6,N6-trimethyllysine mark. Residue E362 is modified to 5-glutamyl glycerylphosphorylethanolamine. N6,N6,N6-trimethyllysine is present on K396.

This sequence belongs to the TRAFAC class translation factor GTPase superfamily. Classic translation factor GTPase family. EF-Tu/EF-1A subfamily.

It localises to the cytoplasm. In terms of biological role, this protein promotes the GTP-dependent binding of aminoacyl-tRNA to the A-site of ribosomes during protein biosynthesis. This Solanum lycopersicum (Tomato) protein is Elongation factor 1-alpha.